A 277-amino-acid polypeptide reads, in one-letter code: MNGFRVLLRSNLSMLLLLALLHFQSLGLDVDSRSAAEVCATHTISPGPKGDDGERGDTGEEGKDGKVGRQGPKGVKGELGDMGAQGNIGKSGPIGKKGDKGEKGLLGIPGEKGKAGTICDCGRYRKVVGQLDISVARLKTSMKFIKNVIAGIRETEEKFYYIVQEEKNYRESLTHCRIRGGMLAMPKDEVVNTLIADYVAKSGFFRVFIGVNDLEREGQYVFTDNTPLQNYSNWKEEEPSDPSGHEDCVEMLSSGRWNDTECHLTMYFVCEFVKKKK.

The signal sequence occupies residues 1-27 (MNGFRVLLRSNLSMLLLLALLHFQSLG). A glycan (N-linked (GlcNAc...) asparagine) is linked at N11. Residues 41-103 (THTISPGPKG…IGKKGDKGEK (63 aa)) are disordered. The Collagen-like domain occupies 45–103 (SPGPKGDDGERGDTGEEGKDGKVGRQGPKGVKGELGDMGAQGNIGKSGPIGKKGDKGEK). Basic and acidic residues predominate over residues 49 to 67 (KGDDGERGDTGEEGKDGKV). The 117-residue stretch at 155 to 271 (TEEKFYYIVQ…CHLTMYFVCE (117 aa)) folds into the C-type lectin domain. 2 disulfide bridges follow: C176/C270 and C248/C262. An N-linked (GlcNAc...) asparagine glycan is attached at N258.

It belongs to the COLEC10/COLEC11 family. Expressed mainly in the liver and stomach, but also in muscles, testes, and intestines.

The protein localises to the secreted. The protein resides in the golgi apparatus. It localises to the cytoplasm. Its function is as follows. Lectin that binds to various sugars: galactose &gt; mannose = fucose &gt; N-acetylglucosamine &gt; N-acetylgalactosamine. Acts as a chemoattractant, probably involved in the regulation of cell migration. The sequence is that of Collectin-10 (Colec10) from Mus musculus (Mouse).